The sequence spans 529 residues: Ribonuclease Y (529 aa).

The chain crosses the membrane as a helical span at residues 4–24 (GLIYISLEVLVACLITALVMY). In terms of domain architecture, KH spans 216 to 297 (LTTRIALPCS…NRIEEVYHRV (82 aa)). The HD domain occupies 342–435 (ALQHSKEVAL…VCAADALSAG (94 aa)).

It belongs to the RNase Y family.

The protein localises to the cell membrane. In terms of biological role, endoribonuclease that initiates mRNA decay. This is Ribonuclease Y from Helicobacter pylori (strain ATCC 700392 / 26695) (Campylobacter pylori).